Consider the following 157-residue polypeptide: uncharacterized protein (157 aa).

May be a DNA-binding protein involved in virion nucleoprotein condensation. This is an uncharacterized protein from Mycoplasma (Bacteriophage L2).